We begin with the raw amino-acid sequence, 273 residues long: F-actin-capping protein subunit alpha (273 aa).

This sequence belongs to the F-actin-capping protein alpha subunit family. Component of the F-actin capping complex, composed of a heterodimer of an alpha and a beta subunit.

It localises to the cytoplasm. It is found in the cytoskeleton. Its subcellular location is the actin patch. F-actin-capping proteins bind in a Ca(2+)-independent manner to the fast growing ends of actin filaments (barbed end) thereby blocking the exchange of subunits at these ends. Unlike other capping proteins (such as gelsolin and severin), these proteins do not sever actin filaments. This is F-actin-capping protein subunit alpha (cap1) from Aspergillus oryzae (strain ATCC 42149 / RIB 40) (Yellow koji mold).